Consider the following 213-residue polypeptide: Redox-sensing transcriptional repressor Rex (213 aa).

The segment at residues 18–57 (LYYRFVNTLKSKGIDRVNSKAISEGLNIDSATIRRDFSYF) is a DNA-binding region (H-T-H motif). Residue 92–97 (GVGNLG) participates in NAD(+) binding.

Belongs to the transcriptional regulatory Rex family. In terms of assembly, homodimer.

The protein localises to the cytoplasm. Its function is as follows. Modulates transcription in response to changes in cellular NADH/NAD(+) redox state. This is Redox-sensing transcriptional repressor Rex from Staphylococcus saprophyticus subsp. saprophyticus (strain ATCC 15305 / DSM 20229 / NCIMB 8711 / NCTC 7292 / S-41).